Reading from the N-terminus, the 419-residue chain is Tol-Pal system protein TolB (419 aa).

Positions 1 to 19 are cleaved as a signal peptide; the sequence is MFNRIISLFLLLFTGQVIA.

The protein belongs to the TolB family. The Tol-Pal system is composed of five core proteins: the inner membrane proteins TolA, TolQ and TolR, the periplasmic protein TolB and the outer membrane protein Pal. They form a network linking the inner and outer membranes and the peptidoglycan layer.

Its subcellular location is the periplasm. In terms of biological role, part of the Tol-Pal system, which plays a role in outer membrane invagination during cell division and is important for maintaining outer membrane integrity. The chain is Tol-Pal system protein TolB from Legionella pneumophila subsp. pneumophila (strain Philadelphia 1 / ATCC 33152 / DSM 7513).